We begin with the raw amino-acid sequence, 276 residues long: Diaminopimelate epimerase (276 aa).

Substrate contacts are provided by N13, Q46, and N66. C75 functions as the Proton donor in the catalytic mechanism. Residues 76–77 (GN), N159, N192, and 210–211 (ER) each bind substrate. The active-site Proton acceptor is the C219. 220-221 (GS) provides a ligand contact to substrate.

This sequence belongs to the diaminopimelate epimerase family. In terms of assembly, homodimer.

Its subcellular location is the cytoplasm. The catalysed reaction is (2S,6S)-2,6-diaminopimelate = meso-2,6-diaminopimelate. It functions in the pathway amino-acid biosynthesis; L-lysine biosynthesis via DAP pathway; DL-2,6-diaminopimelate from LL-2,6-diaminopimelate: step 1/1. Its function is as follows. Catalyzes the stereoinversion of LL-2,6-diaminopimelate (L,L-DAP) to meso-diaminopimelate (meso-DAP), a precursor of L-lysine and an essential component of the bacterial peptidoglycan. This is Diaminopimelate epimerase from Vibrio vulnificus (strain CMCP6).